The following is a 74-amino-acid chain: U6-agatoxin-Ao1a (74 aa).

The first 19 residues, 1–19 (MRFYIAFFFLLLAADMALS), serve as a signal peptide directing secretion. Positions 20–30 (FEIGNSEELER) are excised as a propeptide. 3 disulfides stabilise this stretch: C44-C56, C49-C61, and C55-C72.

In terms of tissue distribution, expressed by the venom gland.

It localises to the secreted. The protein is U6-agatoxin-Ao1a of Agelena orientalis (Funnel-web spider).